The chain runs to 552 residues: Steroid transmembrane transporter SLC22A24 (552 aa).

12 helical membrane passes run 16–36 (FQIL…THIL), 144–164 (LKSV…LMFG), 175–197 (IYTW…PTFV), 201–220 (IFRF…AFIL), 232–252 (IGIT…GGLA), 255–275 (IRDW…LSLL), 349–369 (IICF…GLIL), 371–391 (LQDL…ITFI), 407–427 (INQS…TFLS), 435–455 (VVLA…FFVH), 474–494 (VFSR…VYSP), and 496–516 (LPWV…FCLP).

This sequence belongs to the major facilitator (TC 2.A.1) superfamily. Organic cation transporter (TC 2.A.1.19) family.

It localises to the cell membrane. It carries out the reaction estrone 3-sulfate(out) + glutarate(in) = estrone 3-sulfate(in) + glutarate(out). The catalysed reaction is 17beta-estradiol 17-O-(beta-D-glucuronate)(out) + glutarate(in) = 17beta-estradiol 17-O-(beta-D-glucuronate)(in) + glutarate(out). It catalyses the reaction taurocholate(out) + glutarate(in) = taurocholate(in) + glutarate(out). The enzyme catalyses 5alpha-androstane-3alpha,17beta-diol 3-O-(beta-D-glucuronate)(out) + glutarate(in) = 5alpha-androstane-3alpha,17beta-diol 3-O-(beta-D-glucuronate)(in) + glutarate(out). It carries out the reaction glycocholate(out) + glutarate(in) = glycocholate(in) + glutarate(out). The catalysed reaction is dehydroepiandrosterone 3-sulfate(out) + glutarate(in) = dehydroepiandrosterone 3-sulfate(in) + glutarate(out). It catalyses the reaction glutarate(in) + succinate(out) = glutarate(out) + succinate(in). In terms of biological role, renal transmembrane organic anion/dicarboxylate exchanger that participates in the reabsorption of conjugated steroids, as well as bile acids, driven by an outward gradient of dicarboxylates such as glutarate or succinate. Transports androstanediol glucuronide (5alpha-androstane-3alpha,17beta-diol 3-O-(beta-D-glucuronate)), estrone 3-sulfate, and estradiol-17-glucuronide (17beta-estradiol 17-O-(beta-D-glucuronate)), and taurocholate. The sequence is that of Steroid transmembrane transporter SLC22A24 from Oryctolagus cuniculus (Rabbit).